Reading from the N-terminus, the 99-residue chain is Protein Frey (99 aa).

Residues 7 to 29 (GALYPRAGLSLFLLYLVLAAVLL) form a helical membrane-spanning segment. The tract at residues 65–88 (PKHPWPRGPRPLLSRAQQRKRDGP) is disordered.

Interacts with SPPL2C (via active sites); the interaction stabilizes FREY1 protein and inhibits SPPL2C proteolytic activity. Interacts with IZUMO1; the interaction retains IZUMO1 at the endoplasmic reticulum membrane and coordinates IZUMO1 complex assembly.

It is found in the endoplasmic reticulum membrane. Functionally, key regulator for male fertility expressed transiently in round spermatids where it recruits IZUMO1 at the endoplasmic reticulum (ER) membrane and coordinates the oolemmal binding multimeric complex (IZUMO1 complex) assembly. Upon complete assembly of the IZUMO1 complex, its ER retention is released, facilitating IZUMO1 complex export to the acrosome. Through the interaction with SPPL2C, inhibits its intramembrane protease activity directly accessing the catalytic center of an I-CLiP. The sequence is that of Protein Frey from Ailuropoda melanoleuca (Giant panda).